The sequence spans 473 residues: Ribulose bisphosphate carboxylase large chain 2 (473 aa).

Positions 116 and 166 each coordinate substrate. Residue lysine 168 is the Proton acceptor of the active site. Position 170 (lysine 170) interacts with substrate. Lysine 194, aspartate 196, and glutamate 197 together coordinate Mg(2+). Lysine 194 is subject to N6-carboxylysine. Catalysis depends on histidine 287, which acts as the Proton acceptor. 3 residues coordinate substrate: arginine 288, histidine 320, and serine 372.

It belongs to the RuBisCO large chain family. Type I subfamily. As to quaternary structure, heterohexadecamer of 8 large chains and 8 small chains. Mg(2+) is required as a cofactor.

The enzyme catalyses 2 (2R)-3-phosphoglycerate + 2 H(+) = D-ribulose 1,5-bisphosphate + CO2 + H2O. It carries out the reaction D-ribulose 1,5-bisphosphate + O2 = 2-phosphoglycolate + (2R)-3-phosphoglycerate + 2 H(+). Its function is as follows. RuBisCO catalyzes two reactions: the carboxylation of D-ribulose 1,5-bisphosphate, the primary event in carbon dioxide fixation, as well as the oxidative fragmentation of the pentose substrate. Both reactions occur simultaneously and in competition at the same active site. The sequence is that of Ribulose bisphosphate carboxylase large chain 2 from Acidithiobacillus ferrooxidans (strain ATCC 23270 / DSM 14882 / CIP 104768 / NCIMB 8455) (Ferrobacillus ferrooxidans (strain ATCC 23270)).